The sequence spans 626 residues: MAKREFKAESKRLLDIMINSIYSQKEVFLRELISNASDAIDKIYYKALTDDSLTFNKDDYYIKISADKENRTLTIADTGIGMTKEELEEHLGTIAKSGSLAFKQENELKDGHDIIGQFGVGFYAAFMVADTVTVITKAHGSDEAHQWESAGADGYTIEPAAKESAGTDVILKLKENTDDENYDEYLDVHRLKAIIKTYSDFIRYPIKMDVAVNKPKEGAENEFEEVQEEQTVNSMVPIWRKNKSELKDEDYEAFYKEKHYGFDKPLAHIHTSVDGAVRYHAILFIPENIPFNYYTKEFEKGLELYSNGVLIMEKCPDLLPDHFSFVKGMVDSEDLSLNISREMLQHDRQLKLIAKNISKKIKNELKSLLKNDREKYESFYQSFGRQLKFGVYNDFGAHKDLLKDLLLFYSSKEKKLVTLEEYVSRMPEDQKYIYYASGDSYDRIEKLPQTELVSEKGYEILYFTEDIDEFAIKMLANYQEKEFKSVSSGDLGIENDDEQNQSDGDDSQYKDLFEEMKKTLDGKVKSVRASKRLKTHSVCLAADGEVTIEMEKILNAMPDNQHVKADKVLEINTNHEVFKTLQNAFDNDKDKFKLYTGLLYNQALLIEGLPIEDPVEFTNDICKVMA.

Positions 1–341 (MAKREFKAES…SEDLSLNISR (341 aa)) are a; substrate-binding. A b region spans residues 342-552 (EMLQHDRQLK…DGEVTIEMEK (211 aa)). Residues 553–626 (ILNAMPDNQH…FTNDICKVMA (74 aa)) are c.

This sequence belongs to the heat shock protein 90 family. Homodimer.

It is found in the cytoplasm. Its function is as follows. Molecular chaperone. Has ATPase activity. This chain is Chaperone protein HtpG, found in Bacillus licheniformis (strain ATCC 14580 / DSM 13 / JCM 2505 / CCUG 7422 / NBRC 12200 / NCIMB 9375 / NCTC 10341 / NRRL NRS-1264 / Gibson 46).